We begin with the raw amino-acid sequence, 508 residues long: Flagellin (508 aa).

Belongs to the bacterial flagellin family.

It localises to the secreted. Its subcellular location is the bacterial flagellum. Its function is as follows. Flagellin is the subunit protein which polymerizes to form the filaments of bacterial flagella. The protein is Flagellin (fliC) of Salmonella oranienberg.